The primary structure comprises 168 residues: MKTMFLLALLAFTATSAVAQLYTTCSQGYGQCQQQPQPQPQPQPQMNTCAAFLQQCSQTPHVQTQMWQASGCQLVRQQCCQPLAQISEQARCQAVCSVAQIIMRQQQGQSFGQPQQQVPVEIMRMVLQTLPLMCRVNIPQYCTTTPCSTITPAIYSIPMTATCAGGAC.

Positions 1–19 (MKTMFLLALLAFTATSAVA) are cleaved as a signal peptide.

Belongs to the prolamin family. In terms of processing, contains 7 disulfide bonds.

Its function is as follows. Seed storage protein. Not integrated in the gluten polymer through disulfide bonds, unless incorporated by reduction and reoxidation during dough making. Increases dough strength and bread volume, but decreases dough stability when added into a base wheat flour. This Triticum aestivum (Wheat) protein is Avenin-like a1 (AVNLA).